The primary structure comprises 146 residues: Large ribosomal subunit protein uL15 (146 aa).

Over residues 1–10 the composition is skewed to basic and acidic residues; it reads MTLKLHDLRP. The disordered stretch occupies residues 1-41; that stretch reads MTLKLHDLRPARGSKIARTRVGRGDGSKGKTAGRGTKGTRA.

It belongs to the universal ribosomal protein uL15 family. Part of the 50S ribosomal subunit.

Binds to the 23S rRNA. This chain is Large ribosomal subunit protein uL15, found in Mycobacterium tuberculosis (strain ATCC 25177 / H37Ra).